We begin with the raw amino-acid sequence, 1006 residues long: E3 ubiquitin-protein ligase MIB1 (1006 aa).

The MIB/HERC2 1 domain occupies 6–74 (NNRVMVEGVG…AYDLRILDSA (69 aa)). The ZZ-type zinc-finger motif lies at 80–132 (HDGTMCDTCRQQPIIGIRWKCAECTNYDLCTVCYHGDKHHLRHRFYRITTPGS). Zn(2+)-binding residues include C85, C88, C100, C103, C109, C112, H118, and H122. In terms of domain architecture, MIB/HERC2 2 spans 143–221 (SKKITARGIF…MSDLKCVQDA (79 aa)). A Phosphoserine modification is found at S408. ANK repeat units lie at residues 430–460 (DLNE…DVNG), 463–492 (AGHT…DVEA), 496–525 (DGDR…DLNA), 529–558 (RRQT…HPSL), 562–591 (EGDT…DVTI), 595–627 (NGFN…IVDE), 631–661 (DGYT…NLDI), 665–694 (NQQT…KLDI), and 698–729 (DGDT…KVDA). 2 consecutive RING-type zinc fingers follow at residues 819-854 (CMVC…LICK) and 866-901 (CVVC…VQCR). Residues 935–962 (QKDKDNTNVNADVQKLQQQLQDIKEQTM) are a coiled coil. Residues 963–996 (CPVCLDRLKNMIFLCGHGTCQLCGDRMSECPICR) form an RING-type 3 zinc finger.

As to quaternary structure, interacts with CEP131 and PCM1. Ubiquitinated; possibly via autoubiquitination. Ubiquitinated; this modification is inhibited in response to cellular stress, such as ultraviolet light (UV) radiation or heat shock. As to expression, widely expressed at low level. Expressed at higher level in spinal cord, ovary, whole brain, and all specific brain regions examined.

The protein resides in the cytoplasm. Its subcellular location is the cytoskeleton. It is found in the microtubule organizing center. The protein localises to the centrosome. It localises to the centriolar satellite. The protein resides in the cell membrane. The enzyme catalyses S-ubiquitinyl-[E2 ubiquitin-conjugating enzyme]-L-cysteine + [acceptor protein]-L-lysine = [E2 ubiquitin-conjugating enzyme]-L-cysteine + N(6)-ubiquitinyl-[acceptor protein]-L-lysine.. It functions in the pathway protein modification; protein ubiquitination. Functionally, E3 ubiquitin-protein ligase that mediates ubiquitination of Delta receptors, which act as ligands of Notch proteins. Positively regulates the Delta-mediated Notch signaling by ubiquitinating the intracellular domain of Delta, leading to endocytosis of Delta receptors. Probably mediates ubiquitination and subsequent proteasomal degradation of DAPK1, thereby antagonizing anti-apoptotic effects of DAPK1 to promote TNF-induced apoptosis. Involved in ubiquitination of centriolar satellite CEP131, CEP290 and PCM1 proteins and hence inhibits primary cilium formation in proliferating cells. Mediates 'Lys-63'-linked polyubiquitination of TBK1, which probably participates in kinase activation. (Microbial infection) During adenovirus infection, mediates ubiquitination of Core-capsid bridging protein. This allows viral genome delivery into nucleus for infection. In Homo sapiens (Human), this protein is E3 ubiquitin-protein ligase MIB1 (MIB1).